The following is a 452-amino-acid chain: Argininosuccinate lyase (452 aa).

The disordered stretch occupies residues 431 to 452; that stretch reads AFRKDSTGSTSPKWSFRAMRRA.

The protein belongs to the lyase 1 family. Argininosuccinate lyase subfamily.

It localises to the cytoplasm. The catalysed reaction is 2-(N(omega)-L-arginino)succinate = fumarate + L-arginine. Its pathway is amino-acid biosynthesis; L-arginine biosynthesis; L-arginine from L-ornithine and carbamoyl phosphate: step 3/3. This chain is Argininosuccinate lyase, found in Tremblaya princeps.